A 340-amino-acid chain; its full sequence is Selenide, water dikinase (340 aa).

The active site involves cysteine 13. Residues lysine 16 and 43-45 (ASD) contribute to the ATP site. Residue aspartate 46 coordinates Mg(2+). ATP is bound by residues aspartate 63, aspartate 86, and 133 to 135 (GHS). Residue aspartate 86 participates in Mg(2+) binding. Aspartate 221 serves as a coordination point for Mg(2+).

The protein belongs to the selenophosphate synthase 1 family. Class I subfamily. As to quaternary structure, homodimer. It depends on Mg(2+) as a cofactor.

The catalysed reaction is hydrogenselenide + ATP + H2O = selenophosphate + AMP + phosphate + 2 H(+). Its function is as follows. Synthesizes selenophosphate from selenide and ATP. The sequence is that of Selenide, water dikinase from Desulfitobacterium hafniense (strain Y51).